Here is a 197-residue protein sequence, read N- to C-terminus: Thymidylate kinase (197 aa).

7 to 14 (GIDGCGKS) is a binding site for ATP.

The protein belongs to the thymidylate kinase family.

The catalysed reaction is dTMP + ATP = dTDP + ADP. Phosphorylation of dTMP to form dTDP in both de novo and salvage pathways of dTTP synthesis. This chain is Thymidylate kinase, found in Fervidobacterium nodosum (strain ATCC 35602 / DSM 5306 / Rt17-B1).